The following is a 454-amino-acid chain: Bifunctional protein GlmU (454 aa).

The segment at 1–225 is pyrophosphorylase; that stretch reads MNIVILAAGM…LWETLGVNSK (225 aa). UDP-N-acetyl-alpha-D-glucosamine contacts are provided by residues 6–9, lysine 20, glutamine 71, 76–77, 98–100, glycine 135, glutamate 150, asparagine 165, and asparagine 223; these read LAAG, GT, and YGD. Aspartate 100 provides a ligand contact to Mg(2+). A Mg(2+)-binding site is contributed by asparagine 223. Positions 226 to 246 are linker; it reads VQLAEVERIHQRNLAQRLLET. The segment at 247–454 is N-acetyltransferase; it reads GVTLADPARI…WQRPVKKAKQ (208 aa). The UDP-N-acetyl-alpha-D-glucosamine site is built by arginine 329 and lysine 347. The active-site Proton acceptor is histidine 359. Residues tyrosine 362 and asparagine 373 each contribute to the UDP-N-acetyl-alpha-D-glucosamine site. Residues alanine 376, 382-383, serine 401, alanine 419, and arginine 436 contribute to the acetyl-CoA site; that span reads NY.

The protein in the N-terminal section; belongs to the N-acetylglucosamine-1-phosphate uridyltransferase family. This sequence in the C-terminal section; belongs to the transferase hexapeptide repeat family. In terms of assembly, homotrimer. It depends on Mg(2+) as a cofactor.

Its subcellular location is the cytoplasm. The catalysed reaction is alpha-D-glucosamine 1-phosphate + acetyl-CoA = N-acetyl-alpha-D-glucosamine 1-phosphate + CoA + H(+). The enzyme catalyses N-acetyl-alpha-D-glucosamine 1-phosphate + UTP + H(+) = UDP-N-acetyl-alpha-D-glucosamine + diphosphate. It participates in nucleotide-sugar biosynthesis; UDP-N-acetyl-alpha-D-glucosamine biosynthesis; N-acetyl-alpha-D-glucosamine 1-phosphate from alpha-D-glucosamine 6-phosphate (route II): step 2/2. Its pathway is nucleotide-sugar biosynthesis; UDP-N-acetyl-alpha-D-glucosamine biosynthesis; UDP-N-acetyl-alpha-D-glucosamine from N-acetyl-alpha-D-glucosamine 1-phosphate: step 1/1. The protein operates within bacterial outer membrane biogenesis; LPS lipid A biosynthesis. In terms of biological role, catalyzes the last two sequential reactions in the de novo biosynthetic pathway for UDP-N-acetylglucosamine (UDP-GlcNAc). The C-terminal domain catalyzes the transfer of acetyl group from acetyl coenzyme A to glucosamine-1-phosphate (GlcN-1-P) to produce N-acetylglucosamine-1-phosphate (GlcNAc-1-P), which is converted into UDP-GlcNAc by the transfer of uridine 5-monophosphate (from uridine 5-triphosphate), a reaction catalyzed by the N-terminal domain. In Cupriavidus pinatubonensis (strain JMP 134 / LMG 1197) (Cupriavidus necator (strain JMP 134)), this protein is Bifunctional protein GlmU.